A 1487-amino-acid polypeptide reads, in one-letter code: Major viral transcription factor (1487 aa).

Disordered regions lie at residues 41-295, 310-370, and 803-1007; these read AAPD…LPPG, LAKT…AEEA, and PPTR…HTPR. Residues 66–75 are compositionally biased toward pro residues; that stretch reads VIPPPSPTPE. Low complexity-rich tracts occupy residues 165–193 and 201–213; these read PSSASPGGGSPAPRVRSISISSSSSSSSS and DGAGASSSSSSSS. Positions 214 to 224 are enriched in acidic residues; it reads DDSDSDEGGEE. A compositionally biased stretch (low complexity) spans 235–272; the sequence is AAKTPSAAGSPGPSSGGDRPAAGAATPKSCRSGAASPG. The segment covering 273–285 has biased composition (pro residues); that stretch reads APAPAPASAPAPS. Low complexity-rich tracts occupy residues 807 to 829, 849 to 860, and 867 to 877; these read SQQPSSSSPGGEPFSGSAAAEGS, PSSHSQSPQHSQ, and ATTATCCRATQ. The segment covering 878–893 has biased composition (polar residues); it reads TNARSRGQQHQPQKAR. Residues 920 to 929 are compositionally biased toward basic residues; it reads HGRPRGKSGK. Residues 938–951 show a composition bias toward low complexity; that stretch reads AAQAGASASFSSSA. The span at 988 to 1007 shows a compositional bias: basic and acidic residues; sequence GPDRRGGFRRVPRGDCHTPR.

Belongs to the herpesviridae ICP4 family. In terms of processing, a long stretch of serine residues may be a major site of phosphorylation.

The protein resides in the host nucleus. This IE protein is a multifunctional protein capable of migrating to the nucleus, binding to DNA, trans-activating other viral genes, and autoregulating its own synthesis. This chain is Major viral transcription factor (IE), found in Equine herpesvirus 1 (strain Ab4p) (EHV-1).